An 893-amino-acid polypeptide reads, in one-letter code: Exocyst complex component 4 (893 aa).

The tract at residues 1 to 27 (MNENGATPVAAARRHRPLPAERATSNS) is disordered.

It belongs to the SEC8 family. As to quaternary structure, the exocyst complex is composed of sec-3/exoc1, sec-5/exoc2, sec-6/exoc3, sec-8/exoc4, sec-10/exoc5, sec-15/exoc6, exo-70/exoc7 and exo-84/exoc8. In terms of tissue distribution, pseudocoelom.

Component of the exocyst complex involved in the docking of exocytic vesicles with fusion sites on the plasma membrane. This chain is Exocyst complex component 4 (sec-8), found in Caenorhabditis elegans.